A 365-amino-acid chain; its full sequence is UDP-N-acetylglucosamine--N-acetylmuramyl-(pentapeptide) pyrophosphoryl-undecaprenol N-acetylglucosamine transferase (365 aa).

UDP-N-acetyl-alpha-D-glucosamine is bound by residues 10-12 (TGG), Asn128, Arg170, Ser199, Ile250, and Gln295.

It belongs to the glycosyltransferase 28 family. MurG subfamily.

It is found in the cell inner membrane. The enzyme catalyses di-trans,octa-cis-undecaprenyl diphospho-N-acetyl-alpha-D-muramoyl-L-alanyl-D-glutamyl-meso-2,6-diaminopimeloyl-D-alanyl-D-alanine + UDP-N-acetyl-alpha-D-glucosamine = di-trans,octa-cis-undecaprenyl diphospho-[N-acetyl-alpha-D-glucosaminyl-(1-&gt;4)]-N-acetyl-alpha-D-muramoyl-L-alanyl-D-glutamyl-meso-2,6-diaminopimeloyl-D-alanyl-D-alanine + UDP + H(+). The protein operates within cell wall biogenesis; peptidoglycan biosynthesis. Cell wall formation. Catalyzes the transfer of a GlcNAc subunit on undecaprenyl-pyrophosphoryl-MurNAc-pentapeptide (lipid intermediate I) to form undecaprenyl-pyrophosphoryl-MurNAc-(pentapeptide)GlcNAc (lipid intermediate II). In Prosthecochloris aestuarii (strain DSM 271 / SK 413), this protein is UDP-N-acetylglucosamine--N-acetylmuramyl-(pentapeptide) pyrophosphoryl-undecaprenol N-acetylglucosamine transferase.